A 338-amino-acid polypeptide reads, in one-letter code: 4-hydroxythreonine-4-phosphate dehydrogenase (338 aa).

Substrate-binding residues include His-139 and Thr-140. A divalent metal cation-binding residues include His-169, His-214, and His-270. The substrate site is built by Lys-278, Asn-287, and Arg-296.

The protein belongs to the PdxA family. In terms of assembly, homodimer. The cofactor is Zn(2+). It depends on Mg(2+) as a cofactor. Requires Co(2+) as cofactor.

Its subcellular location is the cytoplasm. It catalyses the reaction 4-(phosphooxy)-L-threonine + NAD(+) = 3-amino-2-oxopropyl phosphate + CO2 + NADH. Its pathway is cofactor biosynthesis; pyridoxine 5'-phosphate biosynthesis; pyridoxine 5'-phosphate from D-erythrose 4-phosphate: step 4/5. Catalyzes the NAD(P)-dependent oxidation of 4-(phosphooxy)-L-threonine (HTP) into 2-amino-3-oxo-4-(phosphooxy)butyric acid which spontaneously decarboxylates to form 3-amino-2-oxopropyl phosphate (AHAP). The polypeptide is 4-hydroxythreonine-4-phosphate dehydrogenase (Desulfosudis oleivorans (strain DSM 6200 / JCM 39069 / Hxd3) (Desulfococcus oleovorans)).